Reading from the N-terminus, the 417-residue chain is Voltage-gated potassium channel Kch (417 aa).

Topologically, residues 1–21 (MSHWATFKQTATNLWVTLRHD) are cytoplasmic. The helical transmembrane segment at 22–41 (ILALAVFLNGLLIFKTIYGM) threads the bilayer. Residues 42-63 (SVNLLDIFHIKAFSELDLSLLA) are Periplasmic-facing. The helical transmembrane segment at 64 to 83 (NAPLFMLGVFLVLNSIGLLF) threads the bilayer. Topologically, residues 84 to 86 (RAK) are cytoplasmic. The helical transmembrane segment at 87 to 104 (LAWAISIILLLIALIYTL) threads the bilayer. The Periplasmic portion of the chain corresponds to 105 to 110 (HFYPWL). A helical membrane pass occupies residues 111-127 (KFSIGFCIFTLVFLLIL). At 128–140 (RKDFSHSSAAAGT) the chain is on the cytoplasmic side. Residues 141 to 160 (IFAFISFTTLLFYSTYGALY) form a helical membrane-spanning segment. At 161-199 (LSEGFNPRIESLMTAFYFSIETMSTVGYGDIVPVSESAR) the chain is on the periplasmic side. The short motif at 185 to 190 (TVGYGD) is the Selectivity filter element. The helical transmembrane segment at 200 to 220 (LFTISVIISGITVFATSMTSI) threads the bilayer. Residues 221–417 (FGPLIRGGFN…KADSKESAQK (197 aa)) are Cytoplasmic-facing. The RCK N-terminal domain occupies 243–363 (KDHFIVCGHS…IKMVHPDIIL (121 aa)).

Belongs to the potassium channel family. As to quaternary structure, dimer.

It is found in the cell inner membrane. In terms of biological role, k(+)-specific ion channel. May play a role in the defense against osmotic shock. In Escherichia coli (strain K12), this protein is Voltage-gated potassium channel Kch (kch).